Consider the following 352-residue polypeptide: S-adenosylmethionine:tRNA ribosyltransferase-isomerase (352 aa).

Belongs to the QueA family. Monomer.

Its subcellular location is the cytoplasm. It catalyses the reaction 7-aminomethyl-7-carbaguanosine(34) in tRNA + S-adenosyl-L-methionine = epoxyqueuosine(34) in tRNA + adenine + L-methionine + 2 H(+). Its pathway is tRNA modification; tRNA-queuosine biosynthesis. Its function is as follows. Transfers and isomerizes the ribose moiety from AdoMet to the 7-aminomethyl group of 7-deazaguanine (preQ1-tRNA) to give epoxyqueuosine (oQ-tRNA). In Paraburkholderia xenovorans (strain LB400), this protein is S-adenosylmethionine:tRNA ribosyltransferase-isomerase.